Consider the following 677-residue polypeptide: Transcription factor IIIB 90 kDa subunit (677 aa).

The TFIIB-type zinc finger occupies 2–33; the sequence is TGRVCRGCGGTDIELDAARGDAVCTACGSVLE. Zn(2+) is bound by residues cysteine 6, cysteine 9, cysteine 25, and cysteine 28. Tandem repeats lie at residues 91-172 and 185-269. Disordered stretches follow at residues 340 to 368 and 385 to 413; these read KGGLASLAKDGSTEDTASSLCGEEDTEDE and LLGGAPGSSEAAGSPEWGGRPPALGSLLD. Threonine 365 carries the post-translational modification Phosphothreonine. Serine 450 is subject to Phosphoserine. Disordered stretches follow at residues 501-521 and 544-653; these read YKEHKPKKSCKRREPIQASTA and RGLS…EDGE. At serine 553 the chain carries Phosphoserine. Residues 640–653 show a composition bias toward acidic residues; the sequence is EEADEEEPDEEDGE.

The protein belongs to the TFIIB family. In terms of assembly, TFIIIB comprises at least the TATA-binding protein (TBP) and the B-related factor 1 (BRF1/TFIIIB90). Interacts with BDP1. Interacts with MAF1.

It is found in the nucleus. Functionally, general activator of RNA polymerase which utilizes different TFIIIB complexes at structurally distinct promoters. The isoform 1 is involved in the transcription of tRNA, adenovirus VA1, 7SL and 5S RNA. Isoform 2 is required for transcription of the U6 promoter. The polypeptide is Transcription factor IIIB 90 kDa subunit (BRF1) (Homo sapiens (Human)).